The chain runs to 318 residues: NADH-quinone oxidoreductase subunit H 2 (318 aa).

A run of 9 helical transmembrane segments spans residues 4-24, 77-97, 106-126, 146-166, 179-199, 214-234, 238-258, 262-282, and 293-313; these read LLIALFSLILLLALLGAAGVF, LAPALAAFPMLAGFGVVAFAP, VGVLFVMGMLALTVWALVLGA, LAYESFLGLSLMGCVLLAGSF, LWFILLQPLGAALFFLAGLAA, LVAGFMTEYSGMSFALFFLGE, ILLVAALFTTLFLGGWAGPIL, IWFGLKVAAISVVFVWLRAAL, and FAWKVALPLALLNLLVTAWIA.

This sequence belongs to the complex I subunit 1 family. As to quaternary structure, NDH-1 is composed of 14 different subunits. Subunits NuoA, H, J, K, L, M, N constitute the membrane sector of the complex.

Its subcellular location is the cell inner membrane. It carries out the reaction a quinone + NADH + 5 H(+)(in) = a quinol + NAD(+) + 4 H(+)(out). In terms of biological role, NDH-1 shuttles electrons from NADH, via FMN and iron-sulfur (Fe-S) centers, to quinones in the respiratory chain. The immediate electron acceptor for the enzyme in this species is believed to be ubiquinone. Couples the redox reaction to proton translocation (for every two electrons transferred, four hydrogen ions are translocated across the cytoplasmic membrane), and thus conserves the redox energy in a proton gradient. This subunit may bind ubiquinone. This Cereibacter sphaeroides (strain ATCC 17023 / DSM 158 / JCM 6121 / CCUG 31486 / LMG 2827 / NBRC 12203 / NCIMB 8253 / ATH 2.4.1.) (Rhodobacter sphaeroides) protein is NADH-quinone oxidoreductase subunit H 2.